A 714-amino-acid chain; its full sequence is Centromere/kinetochore protein zw10 (714 aa).

It belongs to the ZW10 family.

The protein resides in the cytoplasm. Its subcellular location is the nucleus. It is found in the chromosome. It localises to the centromere. The protein localises to the kinetochore. In terms of biological role, required for accurate chromosome segregation. The sequence is that of Centromere/kinetochore protein zw10 (mit(1)15) from Drosophila grimshawi (Hawaiian fruit fly).